The primary structure comprises 381 residues: GDP-mannose transporter (381 aa).

Over 1 to 44 (MAEGKKTDDYTIQMDSIDQGNKSFEAPPPPQPRSPPSGSLSNNP) the chain is Cytoplasmic. A disordered region spans residues 19 to 41 (QGNKSFEAPPPPQPRSPPSGSLS). A compositionally biased stretch (pro residues) spans 26–35 (APPPPQPRSP). Residues 45–65 (ILPVLAYCGSSILMTVMNKYV) form a helical membrane-spanning segment. The Lumenal portion of the chain corresponds to 66-70 (LSGTD). Residues 71–91 (FNLNFFLLCIQSLVCIIAIQT) traverse the membrane as a helical segment. Residues 92–109 (CKSCGLITYRDFSADEAR) lie on the Cytoplasmic side of the membrane. A helical membrane pass occupies residues 110–126 (KWFPITLLLIGMIYTGS). Residues 127-133 (KALQFLS) are Lumenal-facing. The helical transmembrane segment at 134-150 (IPVYTIFKNLTIILIAY) threads the bilayer. Residues 151–159 (GEVLWFGGS) are Cytoplasmic-facing. A helical transmembrane segment spans residues 160–181 (VTGLTLFSFGLMVLSSIIAAWA). The Lumenal segment spans residues 182-199 (DIKHAVESNGDATAKVST). The helical transmembrane segment at 200–220 (LNAGYIWMLVNCLCTSSYVLG) threads the bilayer. The Cytoplasmic portion of the chain corresponds to 221-234 (MRKRIKLTNFKDFD). A helical membrane pass occupies residues 235 to 255 (TMFYNNLLSIPVLIVLSAFLE). At 256-273 (DWSSTNVNRNFPPMDRNS) the chain is on the lumenal side. Residues 274–294 (IVFAMILSGLSSVFISYTSAW) form a helical membrane-spanning segment. Residues 295-302 (CVRVTSST) are Cytoplasmic-facing. Residues 303-323 (TYSMVGALNKLPIAISGLIFF) form a helical membrane-spanning segment. The Lumenal segment spans residues 324–326 (DAP). The helical transmembrane segment at 327–347 (VTFPSVSAIVVGFVSGIVYAV) threads the bilayer. Residues 348–381 (AKIKQNAKPRTGVLPTANPPVSASSQSMRDSLRS) lie on the Cytoplasmic side of the membrane. The segment at 358-381 (TGVLPTANPPVSASSQSMRDSLRS) is disordered. Polar residues predominate over residues 366 to 381 (PPVSASSQSMRDSLRS).

The protein belongs to the TPT transporter family. SLC35D subfamily. As to quaternary structure, homooligomer.

The protein localises to the golgi apparatus membrane. Its subcellular location is the cytoplasmic vesicle membrane. The protein resides in the endoplasmic reticulum membrane. Functionally, involved in the import of GDP-mannose from the cytoplasm into the Golgi lumen. The protein is GDP-mannose transporter (gmt1) of Aspergillus niger (strain ATCC MYA-4892 / CBS 513.88 / FGSC A1513).